An 899-amino-acid polypeptide reads, in one-letter code: Probable disease resistance protein RXW24L (899 aa).

The stretch at 13–50 (DRLSQEYDQFKGVEDQVTELKSNLNLLKSFLKDADAKK) forms a coiled coil. The NB-ARC domain occupies 143–455 (LQERQREMRH…AEGISERRRY (313 aa)). Residue 189 to 196 (GMGGLGKT) participates in ATP binding.

Belongs to the disease resistance NB-LRR family.

In terms of biological role, potential disease resistance protein. The polypeptide is Probable disease resistance protein RXW24L (RXW24L) (Arabidopsis thaliana (Mouse-ear cress)).